A 428-amino-acid polypeptide reads, in one-letter code: Cysteine synthase 2 (428 aa).

The chain crosses the membrane as a helical span at residues 7-27 (IYIGSAFVAGVVLTIAFKDLF). An N6-(pyridoxal phosphate)lysine modification is found at K106. Residues 260 to 264 (GTGGT) and S367 each bind pyridoxal 5'-phosphate.

Belongs to the cysteine synthase/cystathionine beta-synthase family. The cofactor is pyridoxal 5'-phosphate.

The protein localises to the mitochondrion outer membrane. The catalysed reaction is O-acetyl-L-serine + hydrogen sulfide = L-cysteine + acetate. In terms of biological role, putative cysteine synthase that catalyzes the conversion of O-acetyl-L-serine (OAS) into cysteine, the last step in the cysteine biosynthesis pathway. However, in contrast to cysteine synthase cysB, this CS-like protein seems not to function in cysteine biosynthesis. The sequence is that of Cysteine synthase 2 from Emericella nidulans (strain FGSC A4 / ATCC 38163 / CBS 112.46 / NRRL 194 / M139) (Aspergillus nidulans).